Here is a 512-residue protein sequence, read N- to C-terminus: 2,3-bisphosphoglycerate-independent phosphoglycerate mutase (512 aa).

Mn(2+) contacts are provided by D12 and S62. S62 acts as the Phosphoserine intermediate in catalysis. Substrate-binding positions include H123, 153-154 (RD), R185, R191, 260-263 (RPDR), and K333. Positions 400, 404, 441, 442, and 460 each coordinate Mn(2+).

The protein belongs to the BPG-independent phosphoglycerate mutase family. Monomer. Mn(2+) serves as cofactor.

It carries out the reaction (2R)-2-phosphoglycerate = (2R)-3-phosphoglycerate. The protein operates within carbohydrate degradation; glycolysis; pyruvate from D-glyceraldehyde 3-phosphate: step 3/5. In terms of biological role, catalyzes the interconversion of 2-phosphoglycerate and 3-phosphoglycerate. This Clostridium perfringens (strain SM101 / Type A) protein is 2,3-bisphosphoglycerate-independent phosphoglycerate mutase.